Reading from the N-terminus, the 20-residue chain is Superoxide dismutase [Mn], mitochondrial (20 aa).

Belongs to the iron/manganese superoxide dismutase family. In terms of assembly, homotetramer. It depends on Mn(2+) as a cofactor.

Its subcellular location is the mitochondrion matrix. The catalysed reaction is 2 superoxide + 2 H(+) = H2O2 + O2. Its function is as follows. Destroys superoxide anion radicals which are normally produced within the cells and which are toxic to biological systems. This Hordeum vulgare (Barley) protein is Superoxide dismutase [Mn], mitochondrial (SODA).